The following is a 199-amino-acid chain: NADH-quinone oxidoreductase subunit C (199 aa).

Belongs to the complex I 30 kDa subunit family. NDH-1 is composed of 14 different subunits. Subunits NuoB, C, D, E, F, and G constitute the peripheral sector of the complex.

The protein resides in the cell membrane. It carries out the reaction a quinone + NADH + 5 H(+)(in) = a quinol + NAD(+) + 4 H(+)(out). Its function is as follows. NDH-1 shuttles electrons from NADH, via FMN and iron-sulfur (Fe-S) centers, to quinones in the respiratory chain. The immediate electron acceptor for the enzyme in this species is believed to be ubiquinone. Couples the redox reaction to proton translocation (for every two electrons transferred, four hydrogen ions are translocated across the cytoplasmic membrane), and thus conserves the redox energy in a proton gradient. This Polynucleobacter asymbioticus (strain DSM 18221 / CIP 109841 / QLW-P1DMWA-1) (Polynucleobacter necessarius subsp. asymbioticus) protein is NADH-quinone oxidoreductase subunit C.